The following is a 491-amino-acid chain: Protein nucleotidyltransferase YdiU (491 aa).

ATP-binding residues include Gly-92, Gly-94, Arg-95, Lys-115, Asp-127, Gly-128, Arg-178, and Arg-185. Residue Asp-254 is the Proton acceptor of the active site. 2 residues coordinate Mg(2+): Asn-255 and Asp-264. ATP is bound at residue Asp-264.

Belongs to the SELO family. Requires Mg(2+) as cofactor. The cofactor is Mn(2+).

The enzyme catalyses L-seryl-[protein] + ATP = 3-O-(5'-adenylyl)-L-seryl-[protein] + diphosphate. It carries out the reaction L-threonyl-[protein] + ATP = 3-O-(5'-adenylyl)-L-threonyl-[protein] + diphosphate. The catalysed reaction is L-tyrosyl-[protein] + ATP = O-(5'-adenylyl)-L-tyrosyl-[protein] + diphosphate. It catalyses the reaction L-histidyl-[protein] + UTP = N(tele)-(5'-uridylyl)-L-histidyl-[protein] + diphosphate. The enzyme catalyses L-seryl-[protein] + UTP = O-(5'-uridylyl)-L-seryl-[protein] + diphosphate. It carries out the reaction L-tyrosyl-[protein] + UTP = O-(5'-uridylyl)-L-tyrosyl-[protein] + diphosphate. Functionally, nucleotidyltransferase involved in the post-translational modification of proteins. It can catalyze the addition of adenosine monophosphate (AMP) or uridine monophosphate (UMP) to a protein, resulting in modifications known as AMPylation and UMPylation. The sequence is that of Protein nucleotidyltransferase YdiU from Pseudarthrobacter chlorophenolicus (strain ATCC 700700 / DSM 12829 / CIP 107037 / JCM 12360 / KCTC 9906 / NCIMB 13794 / A6) (Arthrobacter chlorophenolicus).